Here is a 21-residue protein sequence, read N- to C-terminus: Nigrocin-2JDa (21 aa).

Cysteines 15 and 21 form a disulfide.

As to expression, expressed by the skin glands.

Its subcellular location is the secreted. In terms of biological role, has antibacterial activity against E.coli ATCC 25992 (MIC=16 uM), E.coli CIB 84492 (MIC=16 uM), S.aureus ATCC 25923 (MIC=16 uM) and S.aureus CIB 85462 (MIC=8 uM). Has antifungal activity against C.albicans (MIC=63 uM). Has hemolytic activity against rabbit erythrocytes. This chain is Nigrocin-2JDa, found in Odorrana jingdongensis (Jingdong frog).